Reading from the N-terminus, the 331-residue chain is Ketol-acid reductoisomerase (NADP(+)) (331 aa).

Residues Ala2–Thr182 enclose the KARI N-terminal Rossmann domain. NADP(+) is bound by residues Tyr25–Gln28, Ser51, Ser53, and Asp83–Gln86. The active site involves His108. Gly134 is an NADP(+) binding site. One can recognise a KARI C-terminal knotted domain in the interval Asn183–Leu328. Asp191, Glu195, Glu227, and Glu231 together coordinate Mg(2+). Ser252 contributes to the substrate binding site.

This sequence belongs to the ketol-acid reductoisomerase family. Mg(2+) is required as a cofactor.

It carries out the reaction (2R)-2,3-dihydroxy-3-methylbutanoate + NADP(+) = (2S)-2-acetolactate + NADPH + H(+). It catalyses the reaction (2R,3R)-2,3-dihydroxy-3-methylpentanoate + NADP(+) = (S)-2-ethyl-2-hydroxy-3-oxobutanoate + NADPH + H(+). It functions in the pathway amino-acid biosynthesis; L-isoleucine biosynthesis; L-isoleucine from 2-oxobutanoate: step 2/4. It participates in amino-acid biosynthesis; L-valine biosynthesis; L-valine from pyruvate: step 2/4. In terms of biological role, involved in the biosynthesis of branched-chain amino acids (BCAA). Catalyzes an alkyl-migration followed by a ketol-acid reduction of (S)-2-acetolactate (S2AL) to yield (R)-2,3-dihydroxy-isovalerate. In the isomerase reaction, S2AL is rearranged via a Mg-dependent methyl migration to produce 3-hydroxy-3-methyl-2-ketobutyrate (HMKB). In the reductase reaction, this 2-ketoacid undergoes a metal-dependent reduction by NADPH to yield (R)-2,3-dihydroxy-isovalerate. This is Ketol-acid reductoisomerase (NADP(+)) from Synechococcus sp. (strain CC9311).